The chain runs to 272 residues: Heat stress transcription factor A-7a (272 aa).

Positions 1–26 are disordered; the sequence is MMNPFLPEGCDPPPPPQPMEGLHENA. Residues 27–121 mediate DNA binding; sequence PPPFLTKTFE…LLKNIKRRNP (95 aa). A hydrophobic repeat HR-A/B region spans residues 132-186; the sequence is ACNELRREKQVLMMEIVSLRQQQQTTKSYIKAMEQRIEGTERKQRQMMSFLARAM. The Bipartite nuclear localization signal signature appears at 201–216; sequence KKIKELEDNESAKRKR. Over residues 203–212 the composition is skewed to basic and acidic residues; that stretch reads IKELEDNESA. The interval 203 to 223 is disordered; that stretch reads IKELEDNESAKRKRGSSSMSE. An AHA motif is present at residues 256–265; the sequence is DGFWEELLSD.

Belongs to the HSF family. Class A subfamily. In terms of assembly, homotrimer. In terms of processing, exhibits temperature-dependent phosphorylation.

It localises to the nucleus. Transcriptional activator that specifically binds DNA sequence 5'-AGAAnnTTCT-3' known as heat shock promoter elements (HSE). This is Heat stress transcription factor A-7a (HSFA7A) from Arabidopsis thaliana (Mouse-ear cress).